Reading from the N-terminus, the 270-residue chain is Hydroxyethylthiazole kinase (270 aa).

M47 is a binding site for substrate. Residues R123 and T169 each coordinate ATP. A substrate-binding site is contributed by G196.

Belongs to the Thz kinase family. The cofactor is Mg(2+).

It carries out the reaction 5-(2-hydroxyethyl)-4-methylthiazole + ATP = 4-methyl-5-(2-phosphooxyethyl)-thiazole + ADP + H(+). Its pathway is cofactor biosynthesis; thiamine diphosphate biosynthesis; 4-methyl-5-(2-phosphoethyl)-thiazole from 5-(2-hydroxyethyl)-4-methylthiazole: step 1/1. Functionally, catalyzes the phosphorylation of the hydroxyl group of 4-methyl-5-beta-hydroxyethylthiazole (THZ). The sequence is that of Hydroxyethylthiazole kinase from Roseiflexus castenholzii (strain DSM 13941 / HLO8).